The primary structure comprises 259 residues: Thiazole synthase (259 aa).

Residue lysine 98 is the Schiff-base intermediate with DXP of the active site. Residues glycine 159, 185 to 186, and 207 to 208 each bind 1-deoxy-D-xylulose 5-phosphate; these read AG and NS.

This sequence belongs to the ThiG family. In terms of assembly, homotetramer. Forms heterodimers with either ThiH or ThiS.

Its subcellular location is the cytoplasm. The catalysed reaction is [ThiS sulfur-carrier protein]-C-terminal-Gly-aminoethanethioate + 2-iminoacetate + 1-deoxy-D-xylulose 5-phosphate = [ThiS sulfur-carrier protein]-C-terminal Gly-Gly + 2-[(2R,5Z)-2-carboxy-4-methylthiazol-5(2H)-ylidene]ethyl phosphate + 2 H2O + H(+). It participates in cofactor biosynthesis; thiamine diphosphate biosynthesis. In terms of biological role, catalyzes the rearrangement of 1-deoxy-D-xylulose 5-phosphate (DXP) to produce the thiazole phosphate moiety of thiamine. Sulfur is provided by the thiocarboxylate moiety of the carrier protein ThiS. In vitro, sulfur can be provided by H(2)S. The protein is Thiazole synthase of Chlorobium limicola (strain DSM 245 / NBRC 103803 / 6330).